Here is a 94-residue protein sequence, read N- to C-terminus: Co-chaperonin GroES (94 aa).

This sequence belongs to the GroES chaperonin family. In terms of assembly, heptamer of 7 subunits arranged in a ring. Interacts with the chaperonin GroEL.

The protein localises to the cytoplasm. Functionally, together with the chaperonin GroEL, plays an essential role in assisting protein folding. The GroEL-GroES system forms a nano-cage that allows encapsulation of the non-native substrate proteins and provides a physical environment optimized to promote and accelerate protein folding. GroES binds to the apical surface of the GroEL ring, thereby capping the opening of the GroEL channel. This chain is Co-chaperonin GroES, found in Limosilactobacillus reuteri (strain DSM 20016) (Lactobacillus reuteri).